Consider the following 340-residue polypeptide: Organic solute transporter subunit alpha (340 aa).

At 1–48 (MEPGRTHIKLDPRYTAELLELLETNYSISPACFSHPPTAAQLLRALGP) the chain is on the extracellular side. A glycan (N-linked (GlcNAc...) asparagine) is linked at N25. The chain crosses the membrane as a helical span at residues 49-69 (VDIALTIILTFLTTGSVAIFL). Over 70 to 87 (EDAVYLYKNTLCPIKKRT) the chain is Cytoplasmic. The helical transmembrane segment at 88–108 (LIWSSSAPTVVSVFCCFGLWI) threads the bilayer. Topologically, residues 109–114 (PRALTL) are extracellular. Residues 115–135 (VEMAITSFYAVCFYLLMMVMV) form a helical membrane-spanning segment. Over 136–181 (EGFGGKKAVLRTLKDTPMRVHTGPCCCCCPCCPPLILTRKKLQLLL) the chain is Cytoplasmic. Residues 182 to 202 (LGPFQYAFFKITLSIVGLFLI) form a helical membrane-spanning segment. Topologically, residues 203–219 (PDGIYDPGEISEKSAAL) are extracellular. Residues 220-240 (WINNLLAVSTLLALWSLAILF) form a helical membrane-spanning segment. The Cytoplasmic portion of the chain corresponds to 241 to 255 (RQAKMHLGEQNMGSK). A helical transmembrane segment spans residues 256-276 (FALFQVLVILTALQPAIFSIL). Over 277–297 (ANSGQIACSPPYSSKIRSQVM) the chain is Extracellular. A helical transmembrane segment spans residues 298-317 (NCHMLILETFLMTVLTRMYY). Over 318–340 (RRKDDKVGYEACSLPDLDSALKA) the chain is Cytoplasmic. Residue S330 is modified to Phosphoserine.

This sequence belongs to the OST-alpha family. As to quaternary structure, interacts with SLC51B. The Ost-alpha/Ost-beta complex is a heterodimer composed of alpha (SLC51A) and beta (SLC51B) subunit. Post-translationally, N-glycosylated. As to expression, present at high levels in ileum. In ileum, it is restricted to the apical domain on the mature villus enterocytes with little detectable expression in the goblet cells or crypt enterocytes (at protein level). Expressed in kidney but not in heart, brain, liver, spleen, embryo, lung, thymus, ovary nor testis.

It localises to the cell membrane. It is found in the endoplasmic reticulum membrane. It carries out the reaction taurocholate(out) = taurocholate(in). The catalysed reaction is tauroursodeoxycholate(out) = tauroursodeoxycholate(in). The enzyme catalyses glycoursodeoxycholate(out) = glycoursodeoxycholate(in). It catalyses the reaction glycocholate(out) = glycocholate(in). It carries out the reaction taurochenodeoxycholate(out) = taurochenodeoxycholate(in). The catalysed reaction is glycochenodeoxycholate(out) = glycochenodeoxycholate(in). The enzyme catalyses taurodeoxycholate(out) = taurodeoxycholate(in). It catalyses the reaction glycodeoxycholate(out) = glycodeoxycholate(in). It carries out the reaction prostaglandin E2(out) = prostaglandin E2(in). The catalysed reaction is estrone 3-sulfate(out) = estrone 3-sulfate(in). The enzyme catalyses dehydroepiandrosterone 3-sulfate(out) = dehydroepiandrosterone 3-sulfate(in). Its function is as follows. Essential component of the Ost-alpha/Ost-beta complex, a heterodimer that acts as the intestinal basolateral transporter responsible for bile acid export from enterocytes into portal blood. Efficiently transports the major species of bile acids (taurocholate). Taurine conjugates are transported more efficiently across the basolateral membrane than glycine-conjugated bile acids. Can also transport steroids such as estrone 3-sulfate and dehydroepiandrosterone 3-sulfate, therefore playing a role in the enterohepatic circulation of sterols. Able to transport eicosanoids such as prostaglandin E2. This Mus musculus (Mouse) protein is Organic solute transporter subunit alpha (Slc51a).